The following is a 102-amino-acid chain: Small ribosomal subunit protein uS10 (102 aa).

Belongs to the universal ribosomal protein uS10 family. Part of the 30S ribosomal subunit.

Involved in the binding of tRNA to the ribosomes. This chain is Small ribosomal subunit protein uS10, found in Bifidobacterium longum subsp. infantis (strain ATCC 15697 / DSM 20088 / JCM 1222 / NCTC 11817 / S12).